Here is a 794-residue protein sequence, read N- to C-terminus: MYCNIKWLNRSLIYYGGAMSSMNTNERIVPLLPLRGVLVYPTMVLHLDVGRDKSIQALEQAAMDENIIFLAMQKEMNIDDPKEDDIYSVGTVAKVKQMLKLPNGTLRVLVEGLHRAEVVEFIEEENVVQVSIKTVTEEVEADLEEKALMRTLLEHFEQYIKVSKKVSNETFATVADVEEPGRLADLIASHLPIKTKQKQEILEIISVKERLHTLISIIQDEQELLSLEKKIGQKVKRSMERTQKEYFLREQMKAIQTELGDKEGKGGEVEELREKIEQSGMPEETMKAALKELDRYEKLPASSAESGVIRNYMDWLLALPWTDATEDMIDLAHSEEILNKDHYGLEKVKERVLEYLAVQKLTNSLKGPILCLVGPPGVGKTSLARSIATSLNRNFVRVSLGGVRDESEIRGHRRTYVGAMPGRIIQGMKKAKSVNPVFLLDEIDKMSNDFRGDPSAALLEVLDPEQNHNFSDHYIEEPYDLSKVMFVATANTLSSIPGPLLDRMEIISIAGYTELEKVHIAREHLLPKQLQEHGLRKGNLQVRDEALLEIIRYYTREAGVRTLERQIAKVCRKAAKIIVTAERKRIVVTEKNVVDLLGKHIFRYGQAEKTDQVGMATGLAYTAAGGDTLAIEVSVAPGKGKLILTGKLGDVMKESAQAAFSYIRSRAEELQIDPDFHEKNDIHIHVPEGAVPKDGPSAGITMATALISALTGIPVSKEVGMTGEITLRGRVLPIGGLKEKTLSAHRAGLTKIILPAENEKDLDDIPESVKENLTFVLASHLDEVLEHALVGVKQ.

Positions 29-222 (VPLLPLRGVL…TLISIIQDEQ (194 aa)) constitute a Lon N-terminal domain. Residue 374 to 381 (GPPGVGKT) participates in ATP binding. The Lon proteolytic domain maps to 610 to 791 (TDQVGMATGL…DEVLEHALVG (182 aa)). Active-site residues include Ser-697 and Lys-740.

The protein belongs to the peptidase S16 family. As to quaternary structure, homohexamer. Organized in a ring with a central cavity.

The protein resides in the cytoplasm. It carries out the reaction Hydrolysis of proteins in presence of ATP.. ATP-dependent serine protease that mediates the selective degradation of mutant and abnormal proteins as well as certain short-lived regulatory proteins. Required for cellular homeostasis and for survival from DNA damage and developmental changes induced by stress. Degrades polypeptides processively to yield small peptide fragments that are 5 to 10 amino acids long. Binds to DNA in a double-stranded, site-specific manner. The chain is Lon protease from Bacillus thuringiensis (strain Al Hakam).